The primary structure comprises 329 residues: tRNA pseudouridine synthase B (329 aa).

A substrate-binding site is contributed by His43. The Nucleophile role is filled by Asp48. The substrate site is built by Tyr76, Tyr179, and Leu200.

This sequence belongs to the pseudouridine synthase TruB family. Type 1 subfamily.

It carries out the reaction uridine(55) in tRNA = pseudouridine(55) in tRNA. Responsible for synthesis of pseudouridine from uracil-55 in the psi GC loop of transfer RNAs. In Yersinia enterocolitica serotype O:8 / biotype 1B (strain NCTC 13174 / 8081), this protein is tRNA pseudouridine synthase B.